Here is a 210-residue protein sequence, read N- to C-terminus: Large ribosomal subunit protein uL15 (210 aa).

Disordered regions lie at residues 1-64 and 76-104; these read MADD…AAPR and AAGA…TKGT. Over residues 9–54 the composition is skewed to low complexity; that stretch reads EAAAKPVAEKATATALAKKAPAKAAAADKAAPAAKGETVAAKPAKA. Positions 79-93 are enriched in basic and acidic residues; it reads AKKEKTRVGRGEGSK.

It belongs to the universal ribosomal protein uL15 family. As to quaternary structure, part of the 50S ribosomal subunit.

Binds to the 23S rRNA. The protein is Large ribosomal subunit protein uL15 of Leifsonia xyli subsp. xyli (strain CTCB07).